The sequence spans 691 residues: DNA ligase (691 aa).

Residues 41–45, 90–91, and E130 contribute to the NAD(+) site; these read DAEYD and SL. K132 (N6-AMP-lysine intermediate) is an active-site residue. NAD(+)-binding residues include R153, E190, K307, and K331. 4 residues coordinate Zn(2+): C425, C428, C443, and C449. The region spanning 610–691 is the BRCT domain; sequence APQGVLAGKT…MHTLLEGHAR (82 aa).

It belongs to the NAD-dependent DNA ligase family. LigA subfamily. Mg(2+) is required as a cofactor. The cofactor is Mn(2+).

It carries out the reaction NAD(+) + (deoxyribonucleotide)n-3'-hydroxyl + 5'-phospho-(deoxyribonucleotide)m = (deoxyribonucleotide)n+m + AMP + beta-nicotinamide D-nucleotide.. DNA ligase that catalyzes the formation of phosphodiester linkages between 5'-phosphoryl and 3'-hydroxyl groups in double-stranded DNA using NAD as a coenzyme and as the energy source for the reaction. It is essential for DNA replication and repair of damaged DNA. In Burkholderia pseudomallei (strain 1710b), this protein is DNA ligase.